Consider the following 37-residue polypeptide: MEALVYTFLLVSTLGILFFAIFFREPPKVPTKGGKEN.

Residues 3–23 form a helical membrane-spanning segment; sequence ALVYTFLLVSTLGILFFAIFF.

The protein belongs to the PsbT family. PSII is composed of 1 copy each of membrane proteins PsbA, PsbB, PsbC, PsbD, PsbE, PsbF, PsbH, PsbI, PsbJ, PsbK, PsbL, PsbM, PsbT, PsbY, PsbZ, Psb30/Ycf12, at least 3 peripheral proteins of the oxygen-evolving complex and a large number of cofactors. It forms dimeric complexes.

Its subcellular location is the plastid. It localises to the chloroplast thylakoid membrane. In terms of biological role, found at the monomer-monomer interface of the photosystem II (PS II) dimer, plays a role in assembly and dimerization of PSII. PSII is a light-driven water plastoquinone oxidoreductase, using light energy to abstract electrons from H(2)O, generating a proton gradient subsequently used for ATP formation. This chain is Photosystem II reaction center protein T, found in Ephedra sinica (Chinese ephedra).